The sequence spans 33 residues: Pardaxin P-2 (33 aa).

Belongs to the pardaxin family. In terms of assembly, in aqueous solution exists as a tetramer.

The protein localises to the secreted. The protein resides in the target cell membrane. In terms of biological role, exhibits unusual shark repellent and surfactant properties. Forms voltage-dependent, ion-permeable channels in membranes. At high concentration causes cell membrane lysis. The sequence is that of Pardaxin P-2 from Pardachirus pavoninus (Peacock sole).